A 355-amino-acid polypeptide reads, in one-letter code: C-C chemokine receptor type 3 (355 aa).

Topologically, residues 1 to 34 are extracellular; that stretch reads MTTSLDTVETFGPTSYDDDMGLLCEKADVGALIA. A helical membrane pass occupies residues 35 to 62; sequence QFVPPLYSLVFMVGLLGNVVVVMILIKY. Residues 63 to 72 lie on the Cytoplasmic side of the membrane; that stretch reads RRLRIMTNIY. Residues 73–93 traverse the membrane as a helical segment; it reads LLNLAISDLLFLFTLPFWIHY. Residues 94 to 107 are Extracellular-facing; the sequence is VRERNWVFSHGMCK. Cys-106 and Cys-183 are disulfide-bonded. A helical membrane pass occupies residues 108 to 129; that stretch reads VLSGFYHTGLYSEIFFIILLTI. Over 130-146 the chain is Cytoplasmic; the sequence is DRYLAIVHAVFALRART. The chain crosses the membrane as a helical span at residues 147 to 171; it reads VTFGVVTSIVTWGLAVLAALPEFIF. Topologically, residues 172 to 203 are extracellular; sequence YGTEELFPETLCSAIYPQDTVYSWRHFHTLRM. Residues 204–223 traverse the membrane as a helical segment; sequence TILCLALPLLVMAICYTGII. Residues 224-239 are Cytoplasmic-facing; the sequence is KTLLRCPSKKKYKAIR. A helical membrane pass occupies residues 240 to 264; it reads LIFVIMAVFFIFWTPYNVAILISTY. The Extracellular portion of the chain corresponds to 265–281; the sequence is QSILFGPDCERSKHLDL. The helical transmembrane segment at 282–305 threads the bilayer; that stretch reads FVLVTEVIAYSHCWVNPVIYAFVG. The Cytoplasmic segment spans residues 306-355; that stretch reads ERFRKYLRHFFHRHVLMHPGKYIPFLPSEKLERTSSVSPSTAEPELSIVF.

The protein belongs to the G-protein coupled receptor 1 family.

It is found in the cell membrane. Receptor for C-C type chemokine. Binds and responds to a variety of chemokines, including CCL11, CCL26, CCL7, CCL13, RANTES(CCL5) and CCL15. Subsequently transduces a signal by increasing the intracellular calcium ions level. In addition acts as a possible functional receptor for NARS1. This chain is C-C chemokine receptor type 3 (CCR3), found in Macaca fascicularis (Crab-eating macaque).